Reading from the N-terminus, the 745-residue chain is A-kinase anchor protein 5 (745 aa).

The tract at residues 1-121 is disordered; sequence METSVSEIQV…KKKAKSRLKF (121 aa). The essential to the intracellular anchoring function stretch occupies residues 1–164; that stretch reads METSVSEIQV…EIKAQTQPDD (164 aa). A phosphoserine mark is found at Ser4 and Ser22. Cys36 carries the S-palmitoyl cysteine lipid modification. The segment covering 37–50 has biased composition (basic residues); sequence FKRRKKANKTKPKA. 2 stretches are compositionally biased toward basic and acidic residues: residues 54-63 and 90-100; these read TAEETKKHTP and SEPAKKQKPPE. The AKAP CaM-binding signature appears at 74-94; the sequence is AGAWASIKGLVTHRKRSEPAK. Cys123 is lipidated: S-palmitoyl cysteine. The segment covering 162–175 has biased composition (polar residues); sequence PDDQAIQAGSTQGL. Disordered stretches follow at residues 162–195 and 215–392; these read PDDQ…ISNS and AIQM…DHTE. Composition is skewed to basic and acidic residues over residues 180 to 189 and 222 to 231; these read LVRDGKKSQE and ELEKETKVIT. Polar residues predominate over residues 234–268; the sequence is PSVQTQRASLLESSAAGSPRSVTSAAPPSPATTHQ. The segment covering 285–300 has biased composition (basic and acidic residues); the sequence is GKDDRRKTAAEEKKSG. The stretch at 304–312 is one 1; approximate repeat; sequence LGQAEEAAV. The 28 X 8 AA repeats of V-G-Q-A-E-E-A-T stretch occupies residues 304 to 628; the sequence is LGQAEEAAVG…PTVDQAEEAI (325 aa). One copy of the 2; approximate repeat lies at 320–327; sequence LSQAGEAT. The 3; approximate repeat unit spans residues 328–335; sequence AGHPEEAT. Residues 348–355 form a 4; approximate repeat; that stretch reads LSQAEETT. Residues 356–363 form a 5; approximate repeat; it reads VAQAKETV. The 6; approximate repeat unit spans residues 364-395; that stretch reads LSQAKEGELSQAKKATVGQAEEATIDHTEKVT. A 7; approximate repeat occupies 420 to 436; that stretch reads LSQAKEATVVGQAEEAT. An 8; approximate repeat occupies 445-452; sequence VGQAEEAT. 5 tandem repeats follow at residues 461-468, 469-476, 477-484, 485-492, and 493-500. The disordered stretch occupies residues 466–560; sequence EATVGQAEEA…QAEEATVGQA (95 aa). The stretch at 501 to 508 is one 14; approximate repeat; that stretch reads VGQAEEAT. One copy of the 15; approximate repeat lies at 517–524; the sequence is VDQAEEAT. 4 tandem repeats follow at residues 525-532, 533-540, 541-548, and 549-556. Positions 535-546 are enriched in basic and acidic residues; sequence HTEKVTVDHAEE. Residues 557-564 form a 20; approximate repeat; it reads VGQAEKVT. Residues 565 to 572 form repeat 21; that stretch reads VDHAEEAT. The 22; approximate repeat unit spans residues 573–580; the sequence is VGQAEEAT. The stretch at 581 to 588 is one 23; approximate repeat; that stretch reads VGQAEKVT. The 24; approximate repeat unit spans residues 589-596; it reads VDHAEEAT. Residues 597-604 form repeat 25; sequence VGQAEEAT. Residues 605–612 form a 26; approximate repeat; that stretch reads VGQAEKVT. The 27; approximate repeat unit spans residues 613–620; the sequence is VDQAEEPT. The interval 617–651 is disordered; that stretch reads EEPTVDQAEEAISSHAPDLKENGIDTEKPRSEESK. One copy of the 28; approximate repeat lies at 621–628; it reads VDQAEEAI. Positions 633 to 651 are enriched in basic and acidic residues; that stretch reads PDLKENGIDTEKPRSEESK. The tract at residues 706–727 is RII-beta subunit binding domain; that stretch reads YETLLIETASSLVKNAIELSVE. Positions 728-745 are tethers NFATC2 to CRAC channels; that stretch reads QLVNEMVSEDNQINTLFQ.

In terms of assembly, binding protein for dimer of the RII-beta regulatory subunit of cAMP-dependent protein kinase (PKA) and also for the protein kinase C (PKC) and the phosphatase calcineurin (PP2B). Each enzyme is inhibited when bound to the anchoring protein. Also binds the beta2-adrenergic receptor. Part of a complex containing AKAP5, ADCY5, ADCY6 and PDE4C. Interacts with ADCY8, and enhances its phosphorylation at lipid rafts. Interacts with ORAI1 (isoform alpha) (via N-terminus) upon store depletion and in response to LTC4. Does not interact with ORAI2 and ORAI3 paralogs. Interacts (via leucine zipper domain) with NFATC2/NFAT1. Interacts with calmodulin; the interaction is calcium-independent. Interacts with KCNQ2; the interaction may help KCNQ2 channel complex to retain calcium-bound calmodulin. Interacts with KCNK2; the channel is recruited to postsynaptic microdomains by AKAP5 where it can integrate neurotransmitter receptor signals. Part of a complex composed of AKAP5 and ADRB2. Post-translationally, palmitoylated. Palmitoylation at Cys-36 and Cys-123 play a key role in the targeting of AKAP5 to lipid rafts. Palmitoylation by ZDHHC2 is required for AKAP5 function in LTP-stimulated recycling endosome exocytosis.

It is found in the postsynaptic recycling endosome membrane. It localises to the cell projection. Its subcellular location is the dendrite. The protein localises to the postsynaptic cell membrane. In terms of biological role, multivalent scaffold protein that anchors the cAMP-dependent protein kinase/PKA to cytoskeletal and/or organelle-associated proteins, targeting the signal carried by cAMP to specific intracellular effectors. Association with the beta2-adrenergic receptor (beta2-AR) not only regulates beta2-AR signaling pathway, but also the activation by PKA by switching off the beta2-AR signaling cascade. Plays a role in long term synaptic potentiation by regulating protein trafficking from the dendritic recycling endosomes to the plasma membrane and controlling both structural and functional plasticity at excitatory synapses. In hippocampal pyramidal neurons, recruits KCNK2/TREK-1 channel at postsynaptic dense bodies microdomains and converts it to a leak channel no longer sensitive to stimulation by arachidonic acid, acidic pH or mechanical stress, nor inhibited by Gq-coupled receptors but still under the negative control of Gs-coupled receptors. Associates with ORAI1 pore-forming subunit of CRAC channels in Ca(2+) signaling microdomains where it recruits NFATC2/NFAT1 and couples store-operated Ca(2+) influx to calmodulin and calcineurin signaling and activation of NFAT-dependent transcriptional responses. The polypeptide is A-kinase anchor protein 5 (Akap5) (Mus musculus (Mouse)).